The sequence spans 275 residues: NH(3)-dependent NAD(+) synthetase (275 aa).

47-54 (GISGGQDS) contributes to the ATP binding site. A Mg(2+)-binding site is contributed by Asp-53. Arg-141 serves as a coordination point for deamido-NAD(+). Thr-161 is an ATP binding site. Residue Glu-166 participates in Mg(2+) binding. Deamido-NAD(+) is bound by residues Lys-174 and Asp-181. ATP is bound by residues Lys-190 and Thr-212. 261–262 (HK) is a deamido-NAD(+) binding site.

It belongs to the NAD synthetase family. As to quaternary structure, homodimer.

It carries out the reaction deamido-NAD(+) + NH4(+) + ATP = AMP + diphosphate + NAD(+) + H(+). Its pathway is cofactor biosynthesis; NAD(+) biosynthesis; NAD(+) from deamido-NAD(+) (ammonia route): step 1/1. Its function is as follows. Catalyzes the ATP-dependent amidation of deamido-NAD to form NAD. Uses ammonia as a nitrogen source. This Lacticaseibacillus casei (strain BL23) (Lactobacillus casei) protein is NH(3)-dependent NAD(+) synthetase.